The primary structure comprises 137 residues: Small ribosomal subunit protein uS12 (137 aa).

Residues M1–K57 are disordered. Residue D102 is modified to 3-methylthioaspartic acid.

Belongs to the universal ribosomal protein uS12 family. Part of the 30S ribosomal subunit. Contacts proteins S8 and S17. May interact with IF1 in the 30S initiation complex.

In terms of biological role, with S4 and S5 plays an important role in translational accuracy. Interacts with and stabilizes bases of the 16S rRNA that are involved in tRNA selection in the A site and with the mRNA backbone. Located at the interface of the 30S and 50S subunits, it traverses the body of the 30S subunit contacting proteins on the other side and probably holding the rRNA structure together. The combined cluster of proteins S8, S12 and S17 appears to hold together the shoulder and platform of the 30S subunit. The chain is Small ribosomal subunit protein uS12 from Streptococcus pneumoniae (strain Hungary19A-6).